A 698-amino-acid polypeptide reads, in one-letter code: Elongation factor G (698 aa).

The tr-type G domain maps to 10 to 285 (DKTRNIGIMA…AVVDYLPSPL (276 aa)). GTP-binding positions include 19–26 (AHIDAGKT), 83–87 (DTPGH), and 137–140 (NKMD).

The protein belongs to the TRAFAC class translation factor GTPase superfamily. Classic translation factor GTPase family. EF-G/EF-2 subfamily.

Its subcellular location is the cytoplasm. Its function is as follows. Catalyzes the GTP-dependent ribosomal translocation step during translation elongation. During this step, the ribosome changes from the pre-translocational (PRE) to the post-translocational (POST) state as the newly formed A-site-bound peptidyl-tRNA and P-site-bound deacylated tRNA move to the P and E sites, respectively. Catalyzes the coordinated movement of the two tRNA molecules, the mRNA and conformational changes in the ribosome. The protein is Elongation factor G of Lactiplantibacillus plantarum (strain ATCC BAA-793 / NCIMB 8826 / WCFS1) (Lactobacillus plantarum).